The chain runs to 115 residues: Large ribosomal subunit protein bL19 (115 aa).

Belongs to the bacterial ribosomal protein bL19 family.

Functionally, this protein is located at the 30S-50S ribosomal subunit interface and may play a role in the structure and function of the aminoacyl-tRNA binding site. This Yersinia pseudotuberculosis serotype O:1b (strain IP 31758) protein is Large ribosomal subunit protein bL19.